The chain runs to 710 residues: Phosphoribosylformylglycinamidine synthase subunit PurL (710 aa).

His-36 is an active-site residue. ATP is bound by residues Tyr-39 and Lys-80. Mg(2+) is bound at residue Glu-82. Substrate contacts are provided by residues 83-86 (SHNH) and Arg-105. The active-site Proton acceptor is the His-84. Residue Asp-106 participates in Mg(2+) binding. Gln-226 serves as a coordination point for substrate. Mg(2+) is bound at residue Asp-252. Residue 294-296 (ETQ) coordinates substrate. ATP contacts are provided by Asp-470 and Gly-507. Ser-510 provides a ligand contact to substrate.

Belongs to the FGAMS family. In terms of assembly, monomer. Part of the FGAM synthase complex composed of 1 PurL, 1 PurQ and 2 PurS subunits.

The protein localises to the cytoplasm. The enzyme catalyses N(2)-formyl-N(1)-(5-phospho-beta-D-ribosyl)glycinamide + L-glutamine + ATP + H2O = 2-formamido-N(1)-(5-O-phospho-beta-D-ribosyl)acetamidine + L-glutamate + ADP + phosphate + H(+). It participates in purine metabolism; IMP biosynthesis via de novo pathway; 5-amino-1-(5-phospho-D-ribosyl)imidazole from N(2)-formyl-N(1)-(5-phospho-D-ribosyl)glycinamide: step 1/2. Part of the phosphoribosylformylglycinamidine synthase complex involved in the purines biosynthetic pathway. Catalyzes the ATP-dependent conversion of formylglycinamide ribonucleotide (FGAR) and glutamine to yield formylglycinamidine ribonucleotide (FGAM) and glutamate. The FGAM synthase complex is composed of three subunits. PurQ produces an ammonia molecule by converting glutamine to glutamate. PurL transfers the ammonia molecule to FGAR to form FGAM in an ATP-dependent manner. PurS interacts with PurQ and PurL and is thought to assist in the transfer of the ammonia molecule from PurQ to PurL. This Sulfolobus acidocaldarius (strain ATCC 33909 / DSM 639 / JCM 8929 / NBRC 15157 / NCIMB 11770) protein is Phosphoribosylformylglycinamidine synthase subunit PurL.